The sequence spans 235 residues: Secretory carrier-associated membrane protein 5A (235 aa).

Residues 1-39 (MSDKPNNFPPLPRFIPLKPCFYQDFDTDIPDLHRTTAKR) are Cytoplasmic-facing. The chain crosses the membrane as a helical span at residues 40-60 (LYYLWMLNSITLGVNLIGCLA). The Extracellular segment spans residues 61–67 (WLIGGGS). A helical membrane pass occupies residues 68-88 (ATNFGLAFLWLILFTPCSYVC). The Cytoplasmic segment spans residues 89-102 (WFRPIYKAFKTDSS). The chain crosses the membrane as a helical span at residues 103–125 (FNFMAFFFTFTAQLVISIIQAVG). Residues 126 to 148 (IPGWGVCGWIASISFFGTNVGSA) are Extracellular-facing. The helical transmembrane segment at 149 to 169 (VVMLIPTIMFTAVAVLSFVAL) threads the bilayer. Residues 170–235 (TKVHRFYRGA…TPNYGYSNEM (66 aa)) are Cytoplasmic-facing.

Belongs to the SCAMP family. SCAMP5 subfamily.

It is found in the cell membrane. The protein localises to the golgi apparatus membrane. It localises to the golgi apparatus. Its subcellular location is the trans-Golgi network membrane. The protein resides in the recycling endosome membrane. It is found in the cytoplasmic vesicle. The protein localises to the secretory vesicle. It localises to the synaptic vesicle membrane. Required for the calcium-dependent exocytosis of signal sequence-containing cytokines. Probably acts in cooperation with the SNARE machinery. This is Secretory carrier-associated membrane protein 5A (scamp5-a) from Xenopus laevis (African clawed frog).